The sequence spans 124 residues: Protein MGF 110-4L (124 aa).

The N-terminal stretch at 1-18 is a signal peptide; the sequence is MLVIFLGILGLLANQVLG. N64 carries N-linked (GlcNAc...) asparagine; by host glycosylation. Positions 121–124 match the Prevents secretion from ER motif; the sequence is KEDL.

The protein belongs to the asfivirus MGF 110 family.

It is found in the virion. It localises to the host endoplasmic reticulum-Golgi intermediate compartment. In terms of biological role, causes the redistribution of lumenal ER protein to an enlarged ERGIC compartment. The polypeptide is Protein MGF 110-4L (Ornithodoros (relapsing fever ticks)).